The primary structure comprises 90 residues: Probable Fe(2+)-trafficking protein (90 aa).

It belongs to the Fe(2+)-trafficking protein family. Monomer.

Its function is as follows. Could be a mediator in iron transactions between iron acquisition and iron-requiring processes, such as synthesis and/or repair of Fe-S clusters in biosynthetic enzymes. The sequence is that of Probable Fe(2+)-trafficking protein from Hamiltonella defensa subsp. Acyrthosiphon pisum (strain 5AT).